Here is a 197-residue protein sequence, read N- to C-terminus: Peptide deformylase (197 aa).

The Fe cation site is built by Cys-106 and His-148. Residue Glu-149 is part of the active site. Residue His-152 coordinates Fe cation.

The protein belongs to the polypeptide deformylase family. Fe(2+) is required as a cofactor.

The catalysed reaction is N-terminal N-formyl-L-methionyl-[peptide] + H2O = N-terminal L-methionyl-[peptide] + formate. Functionally, removes the formyl group from the N-terminal Met of newly synthesized proteins. Requires at least a dipeptide for an efficient rate of reaction. N-terminal L-methionine is a prerequisite for activity but the enzyme has broad specificity at other positions. This is Peptide deformylase from Mycolicibacterium paratuberculosis (strain ATCC BAA-968 / K-10) (Mycobacterium paratuberculosis).